The sequence spans 150 residues: 3-hydroxyacyl-[acyl-carrier-protein] dehydratase FabZ (150 aa).

Residue H54 is part of the active site.

Belongs to the thioester dehydratase family. FabZ subfamily.

The protein resides in the cytoplasm. The enzyme catalyses a (3R)-hydroxyacyl-[ACP] = a (2E)-enoyl-[ACP] + H2O. Involved in unsaturated fatty acids biosynthesis. Catalyzes the dehydration of short chain beta-hydroxyacyl-ACPs and long chain saturated and unsaturated beta-hydroxyacyl-ACPs. This Aliivibrio fischeri (strain ATCC 700601 / ES114) (Vibrio fischeri) protein is 3-hydroxyacyl-[acyl-carrier-protein] dehydratase FabZ.